A 528-amino-acid chain; its full sequence is 2-isopropylmalate synthase (528 aa).

Positions 12–279 (IRIFDTTLRD…DSSINTPRIV (268 aa)) constitute a Pyruvate carboxyltransferase domain. Residues aspartate 21, histidine 214, histidine 216, and asparagine 250 each coordinate Mn(2+). Residues 401–528 (RLASMTISDV…TTEAPAPATA (128 aa)) form a regulatory domain region.

This sequence belongs to the alpha-IPM synthase/homocitrate synthase family. LeuA type 1 subfamily. As to quaternary structure, homodimer. The cofactor is Mn(2+).

The protein resides in the cytoplasm. The enzyme catalyses 3-methyl-2-oxobutanoate + acetyl-CoA + H2O = (2S)-2-isopropylmalate + CoA + H(+). It functions in the pathway amino-acid biosynthesis; L-leucine biosynthesis; L-leucine from 3-methyl-2-oxobutanoate: step 1/4. Catalyzes the condensation of the acetyl group of acetyl-CoA with 3-methyl-2-oxobutanoate (2-ketoisovalerate) to form 3-carboxy-3-hydroxy-4-methylpentanoate (2-isopropylmalate). This is 2-isopropylmalate synthase from Stenotrophomonas maltophilia (strain R551-3).